Reading from the N-terminus, the 196-residue chain is Alpha-crystallin A chain (196 aa).

An N-acetylmethionine modification is found at M1. The tract at residues 1–63 is required for complex formation with BFSP1 and BFSP2; sequence MDVTIQHPWF…RTVLDSCISE (63 aa). Q6 is subject to Deamidated glutamine; partial. S45 is modified (phosphoserine). Residue Q50 is modified to Deamidated glutamine; partial. The region spanning 76 to 185 is the sHSP domain; that stretch reads HAGNPENNPI…GHSERAIPVS (110 aa). N6-acetyllysine is present on residues K93 and K122. H123 is a Zn(2+) binding site. Residue N124 is modified to Deamidated asparagine; partial. Zn(2+) is bound by residues E125 and H130. S145 is modified (phosphoserine). A Deamidated glutamine; partial modification is found at Q170. The segment at 170–196 is disordered; the sequence is QSGLDAGHSERAIPVSQEEKPSSAPLF. Positions 176–190 are enriched in basic and acidic residues; sequence GHSERAIPVSQEEKP. H177 contributes to the Zn(2+) binding site. S185 carries O-linked (GlcNAc) serine glycosylation.

The protein belongs to the small heat shock protein (HSP20) family. Heteromer composed of three CRYAA and one CRYAB subunits. Inter-subunit bridging via zinc ions enhances stability, which is crucial as there is no protein turn over in the lens. Can also form homodimers and homotetramers (dimers of dimers) which serve as the building blocks of homooligomers. Within homooligomers, the zinc-binding motif is created from residues of 3 different molecules. His-123 and Glu-125 from one molecule are ligands of the zinc ion, and His-130 and His-177 residues from additional molecules complete the site with tetrahedral coordination geometry. Part of a complex required for lens intermediate filament formation composed of BFSP1, BFSP2 and CRYAA. In terms of processing, acetylation at Lys-93 may increase chaperone activity. Post-translationally, undergoes age-dependent proteolytical cleavage at the C-terminus.

It localises to the cytoplasm. Its subcellular location is the nucleus. Functionally, contributes to the transparency and refractive index of the lens. Acts as a chaperone, preventing aggregation of various proteins under a wide range of stress conditions. Required for the correct formation of lens intermediate filaments as part of a complex composed of BFSP1, BFSP2 and CRYAA. The chain is Alpha-crystallin A chain (CRYAA) from Spalax ehrenbergi (Middle East blind mole rat).